The primary structure comprises 579 residues: Transcription factor COE2 (579 aa).

The interval 63-66 is interaction with DNA; it reads RKSN. Residues 149-168 form a C5-type zinc finger; that stretch reads CRVLLTHEVMCSRCCEKKSC. 2 interaction with DNA regions span residues 195-202 and 234-237; these read NCLKTAGN and NNSK. The region spanning 260–343 is the IPT/TIG domain; the sequence is PCIKAISPSE…KGAPGRFIYT (84 aa). 3 disordered regions span residues 442–482, 514–533, and 549–579; these read GVSI…YGSN, AIMPSSPPGSSSSSSLLPFS, and LRPQGFPHHPSAKTSGGTSFRAMTGLVVPPM. The span at 449-459 shows a compositional bias: polar residues; sequence GQTSGQGYTRN. Composition is skewed to low complexity over residues 460 to 472 and 521 to 533; these read SSSLSPRGYPSSS and PGSSSSSSLLPFS.

This sequence belongs to the COE family.

It localises to the nucleus. This chain is Transcription factor COE2 (coe2), found in Danio rerio (Zebrafish).